The following is a 124-amino-acid chain: Putative ankyrin repeat protein RF_1087 (124 aa).

ANK repeat units lie at residues 17–46 (NDQK…NPNI), 50–79 (NGET…IIDS), and 83–112 (FERT…TIGN).

The sequence is that of Putative ankyrin repeat protein RF_1087 from Rickettsia felis (strain ATCC VR-1525 / URRWXCal2) (Rickettsia azadi).